A 207-amino-acid chain; its full sequence is Zinc finger protein JAGGED-like (207 aa).

Residues 1–16 (MRADENNTLDLNNLPD) show a composition bias toward low complexity. The tract at residues 1–20 (MRADENNTLDLNNLPDDPSR) is disordered. The C2H2-type zinc-finger motif lies at 50 to 72 (YECRFCSLKFFKSQALGGHMNRH).

In terms of tissue distribution, expressed in the emerging leaf, stamen and carpel primordia. Not expressed in the apical shoot meristem (SAM).

The protein localises to the nucleus. Functionally, acts with JAG to promote growth and patterning in stamens and carpels. Promotes the growth of the abaxial and adaxial sides of floral organs. Promotes the growth of the pollen-bearing microsporangia in anthers, the carpel walls of the gynoecium and the establishment of the correct number of cell layers in carpel walls. Promotes leaf blade growth and trichome development. The polypeptide is Zinc finger protein JAGGED-like (JGL) (Arabidopsis thaliana (Mouse-ear cress)).